The primary structure comprises 229 residues: Peptidase E (229 aa).

Catalysis depends on charge relay system residues S120, D135, and H157.

Belongs to the peptidase S51 family.

It localises to the cytoplasm. It catalyses the reaction Dipeptidase E catalyzes the hydrolysis of dipeptides Asp-|-Xaa. It does not act on peptides with N-terminal Glu, Asn or Gln, nor does it cleave isoaspartyl peptides.. In terms of biological role, hydrolyzes dipeptides containing N-terminal aspartate residues. May play a role in allowing the cell to use peptide aspartate to spare carbon otherwise required for the synthesis of the aspartate family of amino acids. This is Peptidase E from Escherichia coli O6:K15:H31 (strain 536 / UPEC).